A 238-amino-acid polypeptide reads, in one-letter code: DNA repair protein RecO (238 aa).

The protein belongs to the RecO family.

Its function is as follows. Involved in DNA repair and RecF pathway recombination. This Hahella chejuensis (strain KCTC 2396) protein is DNA repair protein RecO.